Consider the following 230-residue polypeptide: Small ribosomal subunit protein uS7m (230 aa).

It belongs to the universal ribosomal protein uS7 family. Part of the small ribosomal subunit.

It localises to the mitochondrion. Its function is as follows. One of the primary rRNA binding proteins, it binds directly to 18S rRNA where it nucleates assembly of the head domain of the small subunit. In Marchantia polymorpha (Common liverwort), this protein is Small ribosomal subunit protein uS7m (RPS7).